A 328-amino-acid polypeptide reads, in one-letter code: MDNSTEETFSMDTSEPLEEGEQTHEQRPHTRSNPEGAEDRGVVHQAGVGSRSEGEGEAAQVEDPLPTTTTVPTNSTPPPTLEFQLKTPRVNCPEKVIICLDLSEEMSTQKLESFNGSKANALNSSQKMIEMFVRTKHKIDKRHEFALVVANNEAMWLSGFTSDPREVCSCLYDLETNVCESFNLEGLFNLIQQRTEFPVTDNVQTIPPPYVVRIILIYSRPASQPALALTDNMKKMLQCPYFFFDVIYIHNGSEEEELCWKDIFGFFSSLDSKGTSYKYEVSITGPALELHNCMARLLAHPLQRPFQSHAAYSLLEEEEESPESEVTV.

A compositionally biased stretch (polar residues) spans 1 to 13 (MDNSTEETFSMDT). Positions 1–84 (MDNSTEETFS…STPPPTLEFQ (84 aa)) are disordered. Positions 64 to 74 (PLPTTTTVPTN) are enriched in low complexity. Positions 96 to 297 (VIICLDLSEE…LELHNCMARL (202 aa)) are VWFA-like.

It belongs to the BABAM1 family. As to quaternary structure, component of the ARISC complex, at least composed of uimc1/rap80, abraxas1, brcc3/brcc36, BABAM2 and babam1/nba1. Component of the BRCA1-A complex, at least composed of brca1, bard1, uimc1/rap80, abraxas1, brcc3/brcc36, BABAM2 and babam1/nba1. In the BRCA1-A complex, interacts directly with abraxas1 and BABAM2. Component of the BRISC complex, at least composed of abraxas2, brcc3/brcc36, babam2 and babam1/nba1.

The protein localises to the cytoplasm. Its subcellular location is the nucleus. Functionally, component of the BRCA1-A complex, a complex that specifically recognizes 'Lys-63'-linked ubiquitinated histones H2A and H2AX at DNA lesions sites, leading to target the BRCA1-BARD1 heterodimer to sites of DNA damage at double-strand breaks (DSBs). The BRCA1-A complex also possesses deubiquitinase activity that specifically removes 'Lys-63'-linked ubiquitin on histones H2A and H2AX. In the BRCA1-A complex, it is required for the complex integrity and its localization at DSBs. Component of the BRISC complex, a multiprotein complex that specifically cleaves 'Lys-63'-linked ubiquitin in various substrates. In these 2 complexes, it is probably required to maintain the stability of babam2 and help the 'Lys-63'-linked deubiquitinase activity mediated by brcc3/brcc36 component. The BRISC complex is required for normal mitotic spindle assembly and microtubule attachment to kinetochores via its role in deubiquitinating numa1. Plays a role in interferon signaling via its role in the deubiquitination of the interferon receptor ifnar1; deubiquitination increases ifnar1 activity by enhancing its stability and cell surface expression. Down-regulates the response to bacterial lipopolysaccharide (LPS) via its role in ifnar1 deubiquitination. This is BRISC and BRCA1-A complex member 1 (babam1) from Xenopus laevis (African clawed frog).